Here is a 143-residue protein sequence, read N- to C-terminus: MFLGEYQHSLDEKGRITIPAKFREEIGYKFVATKGLDNCIFLYPQDEWQLIEKKLRSLPFTRADVRSFVRFFFSGAAELDLDRQGRSVLPLNLREYAGIDRDVIIIGVGTRVEIWSTEKWTDYNENAQSSYEEIAENLVDLGI.

SpoVT-AbrB domains follow at residues 5 to 47 (EYQH…PQDE) and 76 to 119 (AAEL…STEK).

The protein belongs to the MraZ family. As to quaternary structure, forms oligomers.

It localises to the cytoplasm. The protein resides in the nucleoid. In Syntrophomonas wolfei subsp. wolfei (strain DSM 2245B / Goettingen), this protein is Transcriptional regulator MraZ.